A 79-amino-acid polypeptide reads, in one-letter code: Sec-independent protein translocase protein TatA (79 aa).

A helical membrane pass occupies residues 1 to 21 (MHMPSGTQWLIILLIVVLLFG).

It belongs to the TatA/E family. As to quaternary structure, the Tat system comprises two distinct complexes: a TatABC complex, containing multiple copies of TatA, TatB and TatC subunits, and a separate TatA complex, containing only TatA subunits. Substrates initially bind to the TatABC complex, which probably triggers association of the separate TatA complex to form the active translocon.

It localises to the cell inner membrane. In terms of biological role, part of the twin-arginine translocation (Tat) system that transports large folded proteins containing a characteristic twin-arginine motif in their signal peptide across membranes. TatA could form the protein-conducting channel of the Tat system. The protein is Sec-independent protein translocase protein TatA of Campylobacter lari (strain RM2100 / D67 / ATCC BAA-1060).